A 202-amino-acid chain; its full sequence is NADH-quinone oxidoreductase subunit C (202 aa).

This sequence belongs to the complex I 30 kDa subunit family. In terms of assembly, NDH-1 is composed of 14 different subunits. Subunits NuoB, C, D, E, F, and G constitute the peripheral sector of the complex.

The protein localises to the cell inner membrane. It carries out the reaction a quinone + NADH + 5 H(+)(in) = a quinol + NAD(+) + 4 H(+)(out). NDH-1 shuttles electrons from NADH, via FMN and iron-sulfur (Fe-S) centers, to quinones in the respiratory chain. The immediate electron acceptor for the enzyme in this species is believed to be ubiquinone. Couples the redox reaction to proton translocation (for every two electrons transferred, four hydrogen ions are translocated across the cytoplasmic membrane), and thus conserves the redox energy in a proton gradient. In Acidovorax sp. (strain JS42), this protein is NADH-quinone oxidoreductase subunit C.